A 570-amino-acid polypeptide reads, in one-letter code: Molecular chaperone MKKS (570 aa).

192–199 (GHIILGKS) contributes to the ATP binding site. The tract at residues 198 to 370 (KSLIVPLKGQ…FHLIPNEATI (173 aa)) is substrate-binding apical domain.

It belongs to the TCP-1 chaperonin family. In terms of assembly, component of a complex composed at least of MKKS, BBS10, BBS12, TCP1, CCT2, CCT3, CCT4, CCT5 and CCT8. Interacts with STUB1. Interacts with BBS2 (via coiled coil domain). Interacts with CCDC28B. Interacts with BBS12. Interacts with SMARCC1, a component of the SWI/SNF complexes; the interaction takes place predominantly in the cytoplasm and may modulate SMARCC1 location. Interacts with DLEC1. In terms of tissue distribution, widely expressed in adult and fetal tissues.

The protein localises to the cytoplasm. The protein resides in the cytoskeleton. It is found in the microtubule organizing center. It localises to the centrosome. Its subcellular location is the cytosol. The protein localises to the nucleus. Probable molecular chaperone that assists the folding of proteins upon ATP hydrolysis. Plays a role in the assembly of BBSome, a complex involved in ciliogenesis regulating transports vesicles to the cilia. May play a role in protein processing in limb, cardiac and reproductive system development. May play a role in cytokinesis. The sequence is that of Molecular chaperone MKKS from Homo sapiens (Human).